The primary structure comprises 317 residues: MIMRFGYVSHAMALWDCSPAKTITFTSFQKLSKQEREDKLYDVTKQNLEHTIRILHYNIAHEIPLYRLSSSIVPLATHPEVEFDYIGAFTPLWRKIGALIKEHNLRISFHPNQFTLFTSDKPHITTNAITDMTYHYKVLDAIGIADSSYINIHVGGAYGNKEKAIERFHENIKKLPAHIKKQMTLENDDKTCTTAETLSICQKEKIPFVFDYHHHMANLCEEPLEELLPAIFETWSHTNIVPKVHISSPKSKKEFRAHAEYIDLEFIKPFLHVAKKINHNFDIMIESKQKDLAMLQFIQELSSIRGIKRISSSTLQW.

This sequence belongs to the uve1/UvsE family.

Its function is as follows. Component in a DNA repair pathway. Removal of UV LIGHT damaged nucleotides. Recognizes pyrimidine dimers and cleave a phosphodiester bond immediately 5' to the lesion. This chain is UV DNA damage endonuclease, found in Bacillus anthracis (strain A0248).